Consider the following 1404-residue polypeptide: Clustered mitochondria protein homolog (1404 aa).

The region spanning 357-646 (HTHHADALRS…RLNPVDINWL (290 aa)) is the Clu domain. Acidic residues predominate over residues 528 to 540 (ADELPEADGETTE). Disordered stretches follow at residues 528-561 (ADEL…SNKA), 706-735 (DAKA…ERLD), 996-1046 (GCHG…ARAT), and 1337-1372 (SERQ…GNGT). A compositionally biased stretch (basic and acidic residues) spans 706 to 723 (DAKAKEAASKEDGEKTEA). 2 stretches are compositionally biased toward low complexity: residues 1021–1046 (NEQQ…ARAT) and 1358–1372 (AAIT…GNGT).

Belongs to the CLU family. As to quaternary structure, may associate with the eukaryotic translation initiation factor 3 (eIF-3) complex.

The protein resides in the cytoplasm. MRNA-binding protein involved in proper cytoplasmic distribution of mitochondria. The protein is Clustered mitochondria protein homolog of Mycosarcoma maydis (Corn smut fungus).